Reading from the N-terminus, the 187-residue chain is Rusticyanin (187 aa).

Residues 1–32 (MYTQNTMKKNWYVTVGAAAALAATVGMGTAMA) form the signal peptide. The region spanning 85–187 (SFEVHDKKNP…TGMFGKIVVK (103 aa)) is the Plastocyanin-like domain. Cu cation is bound by residues His117, Cys170, His175, and Met180.

In terms of assembly, monomer. The cofactor is Cu cation.

The protein resides in the periplasm. Electron carrier from cytochrome c552 to the A-type oxidase. This Acidithiobacillus ferrooxidans (strain ATCC 23270 / DSM 14882 / CIP 104768 / NCIMB 8455) (Ferrobacillus ferrooxidans (strain ATCC 23270)) protein is Rusticyanin (rus).